A 92-amino-acid polypeptide reads, in one-letter code: Small ribosomal subunit protein uS19 (92 aa).

This sequence belongs to the universal ribosomal protein uS19 family.

Functionally, protein S19 forms a complex with S13 that binds strongly to the 16S ribosomal RNA. In Borrelia hermsii (strain HS1 / DAH), this protein is Small ribosomal subunit protein uS19.